We begin with the raw amino-acid sequence, 303 residues long: DCN1-like protein 3 (303 aa).

2 disordered regions span residues 1–41 (MGQC…HLSI) and 62–83 (EASQPLAAGGDTKKKEQGTGAE). Gly2 carries the N-myristoyl glycine lipid modification. Positions 85 to 277 (SSVQRIEELF…LFDTFVEWEM (193 aa)) constitute a DCUN1 domain. The segment at 284-303 (EETKCIPCSGTDDQSTEGQT) is disordered. The segment covering 294–303 (TDDQSTEGQT) has biased composition (polar residues).

As to quaternary structure, may interact (via the DCUN1 domain) with unneddylated cullins.

It is found in the cell membrane. The protein resides in the cytoplasm. It localises to the nucleus. The protein localises to the perinuclear region. In terms of biological role, contributes to the neddylation of all cullins by transferring NEDD8 from N-terminally acetylated NEDD8-conjugating E2s enzyme to different cullin C-terminal domain-RBX complexes. At the cell membrane, can promote and as well inhibit cullins neddylation. The sequence is that of DCN1-like protein 3 from Xenopus tropicalis (Western clawed frog).